Reading from the N-terminus, the 696-residue chain is Transcriptional regulatory protein pro1 (696 aa).

The segment at 1-48 (MSTQSPNHHEDITKTSSVNMTTTTTTTKTKAAAKAGTNAAPKQKTQMH) is disordered. Low complexity predominate over residues 21 to 40 (TTTTTTTKTKAAAKAGTNAA). The segment at residues 55-82 (CYTCRLRRKKCDEGSPMCTACKHLGLCC) is a DNA-binding region (zn(2)-C6 fungal-type). The disordered stretch occupies residues 112-145 (LSEKSSHTIQTSINTPPGLSHSLPTSATFSDPLD). A compositionally biased stretch (polar residues) spans 118-140 (HTIQTSINTPPGLSHSLPTSATF).

It is found in the nucleus. Its function is as follows. May be involved in fruiting body development. The polypeptide is Transcriptional regulatory protein pro1 (adv-1) (Neurospora crassa (strain ATCC 24698 / 74-OR23-1A / CBS 708.71 / DSM 1257 / FGSC 987)).